The following is a 126-amino-acid chain: MIDNGGRFFAMKHGRKIHRLSRPADQRRALLRGLTTQLLKHGRIKTTRAKASAMRKYVDKMITLAKEGSLHKRRQALGFIYEKQIVHALFAEVPERYGDRNGGYTRIIRTLPRRGDNAPMAYIELV.

Residues 1–10 constitute a chloroplast transit peptide; sequence MIDNGGRFFA.

Component of the chloroplast large ribosomal subunit (LSU). Mature 70S chloroplast ribosomes of higher plants consist of a small (30S) and a large (50S) subunit. The 30S small subunit contains 1 molecule of ribosomal RNA (16S rRNA) and 24 different proteins. The 50S large subunit contains 3 rRNA molecules (23S, 5S and 4.5S rRNA) and 33 different proteins.

Its subcellular location is the plastid. It localises to the chloroplast. Its function is as follows. Component of the chloroplast ribosome (chloro-ribosome), a dedicated translation machinery responsible for the synthesis of chloroplast genome-encoded proteins, including proteins of the transcription and translation machinery and components of the photosynthetic apparatus. This is Large ribosomal subunit protein bL17c (RPL17) from Spinacia oleracea (Spinach).